Here is a 592-residue protein sequence, read N- to C-terminus: Cryptochrome-2 (592 aa).

Residues 21 to 150 form the Photolyase/cryptochrome alpha/beta domain; it reads ASSVHWFRKG…EVVTENSHTL (130 aa). A Glycyl lysine isopeptide (Lys-Gly) (interchain with G-Cter in ubiquitin) cross-link involves residue Lys29. Residue Ser89 is modified to Phosphoserine. Residues Lys125 and Lys241 each participate in a glycyl lysine isopeptide (Lys-Gly) (interchain with G-Cter in ubiquitin) cross-link. Ser265 is modified (phosphoserine; by MAPK). Ser270 is a binding site for FAD. A Phosphoserine modification is found at Ser298. An FAD-binding site is contributed by Gln307. Lys347 is covalently cross-linked (Glycyl lysine isopeptide (Lys-Gly) (interchain with G-Cter in ubiquitin)). Residues His373 and 405-407 each bind FAD; that span reads DAD. The required for inhibition of CLOCK-BMAL1-mediated transcription stretch occupies residues 389 to 488; sequence WVSWESGVRV…IIGVDYPRPI (100 aa). Residues Lys474 and Lys503 each participate in a glycyl lysine isopeptide (Lys-Gly) (interchain with G-Cter in ubiquitin) cross-link. The tract at residues 532–592 is disordered; sequence VAEPGSSQAG…PTQEPASKDS (61 aa). Residues 536–547 show a composition bias toward polar residues; sequence GSSQAGSISNTG. Ser553 is modified (phosphoserine; by GSK3-beta). A Phosphoserine; by DYRK1A and MAPK modification is found at Ser557. Over residues 582-592 the composition is skewed to polar residues; it reads MPTQEPASKDS.

This sequence belongs to the DNA photolyase class-1 family. In terms of assembly, component of the circadian core oscillator, which includes the CRY proteins, CLOCK or NPAS2, BMAL1 or BMAL2, CSNK1D and/or CSNK1E, TIMELESS, and the PER proteins. Interacts with TIMELESS. Interacts directly with PER1, PER2 and PER3; interaction with PER2 inhibits its ubiquitination and vice versa. Interacts with CLOCK-BMAL1. Interacts with BMAL1. Interacts with CLOCK. Interacts with NFIL3. Interacts with FBXL3 and FBXL21. FBXL3, PER2 and the cofactor FAD compete for overlapping binding sites. FBXL3 cannot bind CRY2 that interacts already with PER2 or that contains bound FAD. Interacts with PPP5C (via TPR repeats); the interaction down-regulates the PPP5C phosphatase activity on CSNK1E. Interacts with nuclear receptors AR and NR3C1/GR; the interaction is ligand dependent. Interacts with PRKDC. Interacts with CIART. Interacts with DDB1, USP7 and TARDBP. Interacts with HNF4A. Interacts with PPARA. Interacts with PPARG in a ligand-dependent manner. Interacts with PPARD (via domain NR LBD) in a ligand-dependent manner. Interacts with NR1I2 (via domain NR LBD) in a ligand-dependent manner. Interacts with NR1I3 and VDR in a ligand-dependent manner. It depends on FAD as a cofactor. Requires (6R)-5,10-methylene-5,6,7,8-tetrahydrofolate as cofactor. Post-translationally, phosphorylation on Ser-265 by MAPK is important for the inhibition of CLOCK-BMAL1-mediated transcriptional activity. Phosphorylation by CSKNE requires interaction with PER1 or PER2. Phosphorylated in a circadian manner at Ser-553 and Ser-557 in the suprachiasmatic nucleus (SCN) and liver. Phosphorylation at Ser-557 by DYRK1A promotes subsequent phosphorylation at Ser-553 by GSK3-beta: the two-step phosphorylation at the neighboring Ser residues leads to its proteasomal degradation. Ubiquitinated by the SCF(FBXL3) and SCF(FBXL21) complexes, regulating the balance between degradation and stabilization. The SCF(FBXL3) complex is mainly nuclear and mediates ubiquitination and subsequent degradation of CRY2. In contrast, cytoplasmic SCF(FBXL21) complex-mediated ubiquitination leads to stabilize CRY2 and counteract the activity of the SCF(FBXL3) complex. The SCF(FBXL3) and SCF(FBXL21) complexes probably mediate ubiquitination at different Lys residues. The SCF(FBXL3) complex recognizes and binds CRY2 phosphorylated at Ser-553 and Ser-557. Ubiquitination may be inhibited by PER2. Deubiquitinated by USP7. As to expression, expression in the retina is restricted to the photoreceptor layer (at protein level). Expressed in all tissues examined including heart, brain, spleen, lung, liver, skeletal muscle, kidney and testis. Weak expression in spleen.

The protein localises to the cytoplasm. It is found in the nucleus. KL001 (N-[3-(9H-carbazol-9-yl)-2-hydroxypropyl]-N-(2-furanylmethyl)-methanesulfonamide) binds to CRY1 and stabilizes it by inhibiting FBXL3- and ubiquitin-dependent degradation of CRY1 resulting in lengthening of the circadian periods. KL001-mediated CRY1 stabilization can inhibit glucagon-induced gluconeogenesis in primary hepatocytes. Its function is as follows. Transcriptional repressor which forms a core component of the circadian clock. The circadian clock, an internal time-keeping system, regulates various physiological processes through the generation of approximately 24 hour circadian rhythms in gene expression, which are translated into rhythms in metabolism and behavior. It is derived from the Latin roots 'circa' (about) and 'diem' (day) and acts as an important regulator of a wide array of physiological functions including metabolism, sleep, body temperature, blood pressure, endocrine, immune, cardiovascular, and renal function. Consists of two major components: the central clock, residing in the suprachiasmatic nucleus (SCN) of the brain, and the peripheral clocks that are present in nearly every tissue and organ system. Both the central and peripheral clocks can be reset by environmental cues, also known as Zeitgebers (German for 'timegivers'). The predominant Zeitgeber for the central clock is light, which is sensed by retina and signals directly to the SCN. The central clock entrains the peripheral clocks through neuronal and hormonal signals, body temperature and feeding-related cues, aligning all clocks with the external light/dark cycle. Circadian rhythms allow an organism to achieve temporal homeostasis with its environment at the molecular level by regulating gene expression to create a peak of protein expression once every 24 hours to control when a particular physiological process is most active with respect to the solar day. Transcription and translation of core clock components (CLOCK, NPAS2, BMAL1, BMAL2, PER1, PER2, PER3, CRY1 and CRY2) plays a critical role in rhythm generation, whereas delays imposed by post-translational modifications (PTMs) are important for determining the period (tau) of the rhythms (tau refers to the period of a rhythm and is the length, in time, of one complete cycle). A diurnal rhythm is synchronized with the day/night cycle, while the ultradian and infradian rhythms have a period shorter and longer than 24 hours, respectively. Disruptions in the circadian rhythms contribute to the pathology of cardiovascular diseases, cancer, metabolic syndromes and aging. A transcription/translation feedback loop (TTFL) forms the core of the molecular circadian clock mechanism. Transcription factors, CLOCK or NPAS2 and BMAL1 or BMAL2, form the positive limb of the feedback loop, act in the form of a heterodimer and activate the transcription of core clock genes and clock-controlled genes (involved in key metabolic processes), harboring E-box elements (5'-CACGTG-3') within their promoters. The core clock genes: PER1/2/3 and CRY1/2 which are transcriptional repressors form the negative limb of the feedback loop and interact with the CLOCK|NPAS2-BMAL1|BMAL2 heterodimer inhibiting its activity and thereby negatively regulating their own expression. This heterodimer also activates nuclear receptors NR1D1/2 and RORA/B/G, which form a second feedback loop and which activate and repress BMAL1 transcription, respectively. CRY1 and CRY2 have redundant functions but also differential and selective contributions at least in defining the pace of the SCN circadian clock and its circadian transcriptional outputs. Less potent transcriptional repressor in cerebellum and liver than CRY1, though less effective in lengthening the period of the SCN oscillator. Seems to play a critical role in tuning SCN circadian period by opposing the action of CRY1. With CRY1, dispensable for circadian rhythm generation but necessary for the development of intercellular networks for rhythm synchrony. May mediate circadian regulation of cAMP signaling and gluconeogenesis by blocking glucagon-mediated increases in intracellular cAMP concentrations and in CREB1 phosphorylation. Besides its role in the maintenance of the circadian clock, is also involved in the regulation of other processes. Plays a key role in glucose and lipid metabolism modulation, in part, through the transcriptional regulation of genes involved in these pathways, such as LEP or ACSL4. Represses glucocorticoid receptor NR3C1/GR-induced transcriptional activity by binding to glucocorticoid response elements (GREs). Represses the CLOCK-BMAL1 induced transcription of BHLHE40/DEC1 and NAMPT. Represses PPARD and its target genes in the skeletal muscle and limits exercise capacity. Represses the transcriptional activity of NR1I2. In Mus musculus (Mouse), this protein is Cryptochrome-2 (Cry2).